Consider the following 96-residue polypeptide: Translation initiation factor 1A 1 (96 aa).

The S1-like domain maps to 8–82; sequence GSHDLRMPDD…EKGDITWRYE (75 aa).

The protein belongs to the eIF-1A family.

Its function is as follows. Seems to be required for maximal rate of protein biosynthesis. Enhances ribosome dissociation into subunits and stabilizes the binding of the initiator Met-tRNA(I) to 40 S ribosomal subunits. The polypeptide is Translation initiation factor 1A 1 (Haloquadratum walsbyi (strain DSM 16790 / HBSQ001)).